The primary structure comprises 458 residues: MAKSPRRVAGRRLLLPLLCLFFQGATAILFAIFVRYDQQTDAALWHGGNHSNADNEFYFRYPSFQDVHAMVFVGFGFLMVFLQRYGYSSLGFTFLLGAFALQWATLVQGFLHSFHGGHIHVGMESLINADFCAGAVLISFGAVLGKTGPAQLLLMALLEVALFGLNEFVLLCLLGVRDAGGSMTIHTFGAYFGLVLSRVLYRPHLEKSQHRQGSVYHSDLFAMIGTIFLWIFWPSFNSALTSRGDGQPRTALNTYYSLTASTLSTFALSALVGKDGRLDMVHVQNAALAGGVVVGTASEMMLTPFGALAAGCLAGAISTLGYKFFTPILESKLKIQDTCGVHNLHGMPGVLGALLGALMTGLTTHEAYGDGLQSVFPLIAEGQRSATSQAIYQLFGLSVTLLFASAGGVLGGLLLKLPFLDAPPDSQCYEDQMCWEVPGEHGYEAQEALRVEEPDTEA.

Residues M1 to L13 are Cytoplasmic-facing. Residues L14–V34 form a helical membrane-spanning segment. Topologically, residues R35 to Y61 are extracellular. Residue N49 is glycosylated (N-linked (GlcNAc...) asparagine). A helical transmembrane segment spans residues P62–L82. Topologically, residues Q83–G86 are cytoplasmic. Residues Y87–V107 form a helical membrane-spanning segment. The Extracellular segment spans residues Q108–E124. The helical transmembrane segment at S125–G145 threads the bilayer. Residues K146 to P149 are Cytoplasmic-facing. Residues A150 to L170 traverse the membrane as a helical segment. At L171 to D178 the chain is on the extracellular side. The chain crosses the membrane as a helical span at residues A179–Y201. Over R202–D219 the chain is Cytoplasmic. Residues L220–L240 form a helical membrane-spanning segment. The Extracellular segment spans residues T241 to A251. The chain crosses the membrane as a helical span at residues L252–V272. Over G273 to H282 the chain is Cytoplasmic. A helical membrane pass occupies residues V283 to T303. Residue P304 is a topological domain, extracellular. Residues F305–F325 form a helical membrane-spanning segment. Residues T326–G346 are Cytoplasmic-facing. Residues M347 to A367 form a helical membrane-spanning segment. At Y368 to Q393 the chain is on the extracellular side. Residues L394 to L414 form a helical membrane-spanning segment. Over L415–A458 the chain is Cytoplasmic. Residues K416–P424 form an interaction with ANK3 region. A Basolateral sorting signal motif is present at residues Y429–Q432.

Belongs to the ammonium transporter (TC 2.A.49) family. Rh subfamily. Interacts (via C-terminus) with ANK2 and ANK3; required for targeting to the basolateral membrane. N-glycosylated.

Its subcellular location is the cell membrane. It is found in the basolateral cell membrane. The catalysed reaction is NH4(+)(in) = NH4(+)(out). It carries out the reaction methylamine(out) = methylamine(in). The enzyme catalyses CO2(out) = CO2(in). In terms of biological role, ammonium transporter involved in the maintenance of acid-base homeostasis. Transports ammonium and its related derivative methylammonium across the basolateral plasma membrane of epithelial cells likely contributing to renal transepithelial ammonia transport and ammonia metabolism. May transport either NH4(+) or NH3 ammonia species predominantly mediating an electrogenic NH4(+) transport. May act as a CO2 channel providing for renal acid secretion. This Oryctolagus cuniculus (Rabbit) protein is Ammonium transporter Rh type B (RHBG).